We begin with the raw amino-acid sequence, 364 residues long: DNA replication and repair protein RecF (364 aa).

30–37 (GENAQGKT) is an ATP binding site.

Belongs to the RecF family.

It localises to the cytoplasm. In terms of biological role, the RecF protein is involved in DNA metabolism; it is required for DNA replication and normal SOS inducibility. RecF binds preferentially to single-stranded, linear DNA. It also seems to bind ATP. The protein is DNA replication and repair protein RecF of Streptococcus suis (strain 98HAH33).